Consider the following 58-residue polypeptide: uncharacterized protein (58 aa).

Residues 5–27 (FLHANITIIPHSVLYVSLSYYII) traverse the membrane as a helical segment.

It is found in the membrane. This is an uncharacterized protein from Saccharomyces cerevisiae (strain ATCC 204508 / S288c) (Baker's yeast).